Consider the following 312-residue polypeptide: Ribosomal protein L11 methyltransferase (312 aa).

Positions 163, 184, 206, and 248 each coordinate S-adenosyl-L-methionine.

Belongs to the methyltransferase superfamily. PrmA family.

The protein localises to the cytoplasm. The enzyme catalyses L-lysyl-[protein] + 3 S-adenosyl-L-methionine = N(6),N(6),N(6)-trimethyl-L-lysyl-[protein] + 3 S-adenosyl-L-homocysteine + 3 H(+). Functionally, methylates ribosomal protein L11. The polypeptide is Ribosomal protein L11 methyltransferase (Clostridium botulinum (strain 657 / Type Ba4)).